The following is a 181-amino-acid chain: Large ribosomal subunit protein uL16 (181 aa).

It belongs to the universal ribosomal protein uL16 family. Part of the 50S ribosomal subunit.

The polypeptide is Large ribosomal subunit protein uL16 (Pyrococcus furiosus (strain ATCC 43587 / DSM 3638 / JCM 8422 / Vc1)).